Here is a 267-residue protein sequence, read N- to C-terminus: Orotidine 5'-phosphate decarboxylase (267 aa).

Substrate-binding positions include aspartate 37, lysine 59 to histidine 61, aspartate 91 to threonine 100, tyrosine 217, and arginine 235. Lysine 93 functions as the Proton donor in the catalytic mechanism.

The protein belongs to the OMP decarboxylase family.

The catalysed reaction is orotidine 5'-phosphate + H(+) = UMP + CO2. Its pathway is pyrimidine metabolism; UMP biosynthesis via de novo pathway; UMP from orotate: step 2/2. This is Orotidine 5'-phosphate decarboxylase (URA3) from Kluyveromyces marxianus (Yeast).